A 316-amino-acid chain; its full sequence is Sorting nexin-20 (316 aa).

The segment at 1-57 is disordered; that stretch reads MASHKHPGSPGWTGPICQDMAGTTPKASAPRPDLPRPGPEDHLEAQGSPSSNSSMTT. S3 is subject to Phosphoserine. A compositionally biased stretch (polar residues) spans 47-57; it reads GSPSSNSSMTT. In terms of domain architecture, PX spans 74 to 191; it reads VKLLFEIASA…DFLTRPELKE (118 aa). A 1,2-diacyl-sn-glycero-3-phospho-(1D-myo-inositol-3-phosphate) contacts are provided by R116, S118, K143, and R157.

The protein belongs to the sorting nexin family. Interacts with SELPLG. Interaction with SELPLG is controversial.

It is found in the early endosome membrane. Its subcellular location is the cell membrane. The protein resides in the cytoplasm. It localises to the nucleus. Functionally, may play a role in cellular vesicle trafficking. Has been proposed to function as a sorting protein that targets SELPLG into endosomes, but has no effect on SELPLG internalization from the cell surface, or on SELPLG-mediated cell-cell adhesion. This is Sorting nexin-20 (SNX20) from Bos taurus (Bovine).